The primary structure comprises 363 residues: MAP kinase kinase mkk-4 (363 aa).

Residues 1–38 (MVQEDDENLRNSMSLRPTSLSTRPTSLSVNGNEKTLPE) are disordered. Residues 14-28 (SLRPTSLSTRPTSLS) are compositionally biased toward low complexity. The Protein kinase domain maps to 66 to 330 (LQDLGAIGNG…YDTLKSFDFY (265 aa)). Residues 72–80 (IGNGNFGTV) and Lys-95 each bind ATP. Residue Asp-194 is the Proton acceptor of the active site.

This sequence belongs to the protein kinase superfamily. STE Ser/Thr protein kinase family. MAP kinase kinase subfamily. In terms of tissue distribution, expressed in the pharynx, including the corpus, isthmus and terminal bulb.

The protein localises to the cytoplasm. The catalysed reaction is L-seryl-[protein] + ATP = O-phospho-L-seryl-[protein] + ADP + H(+). The enzyme catalyses L-threonyl-[protein] + ATP = O-phospho-L-threonyl-[protein] + ADP + H(+). It catalyses the reaction L-tyrosyl-[protein] + ATP = O-phospho-L-tyrosyl-[protein] + ADP + H(+). Its function is as follows. Activity is required in presynaptic neurons, in a dose-dependent manner, for normal presynaptic development and morphology. Plays a role in the formation of muscle connections, also called muscle arm extensions, between the body wall and the motor axons in the dorsal and ventral cord. This Caenorhabditis elegans protein is MAP kinase kinase mkk-4 (mkk-4).